The following is a 314-amino-acid chain: L-lactate dehydrogenase (314 aa).

NAD(+)-binding positions include valine 16, aspartate 37, lysine 42, tyrosine 68, and 82-83 (GV). Substrate contacts are provided by glutamine 85 and arginine 91. Residues serine 104, 121–123 (ASN), and threonine 146 contribute to the NAD(+) site. Position 123–126 (123–126 (NPVD)) interacts with substrate. 151–154 (DTTR) provides a ligand contact to substrate. The beta-D-fructose 1,6-bisphosphate site is built by arginine 156 and histidine 171. The active-site Proton acceptor is histidine 178. At tyrosine 223 the chain carries Phosphotyrosine. Threonine 232 serves as a coordination point for substrate.

The protein belongs to the LDH/MDH superfamily. LDH family. As to quaternary structure, homotetramer.

The protein localises to the cytoplasm. It carries out the reaction (S)-lactate + NAD(+) = pyruvate + NADH + H(+). Its pathway is fermentation; pyruvate fermentation to lactate; (S)-lactate from pyruvate: step 1/1. Its activity is regulated as follows. Allosterically activated by fructose 1,6-bisphosphate (FBP). Its function is as follows. Catalyzes the conversion of lactate to pyruvate. This Lactococcus lactis subsp. cremoris (strain MG1363) protein is L-lactate dehydrogenase.